The chain runs to 505 residues: Lysine--tRNA ligase (505 aa).

2 residues coordinate Mg(2+): Glu-415 and Glu-422.

This sequence belongs to the class-II aminoacyl-tRNA synthetase family. As to quaternary structure, homodimer. Requires Mg(2+) as cofactor.

The protein resides in the cytoplasm. It catalyses the reaction tRNA(Lys) + L-lysine + ATP = L-lysyl-tRNA(Lys) + AMP + diphosphate. This chain is Lysine--tRNA ligase, found in Pectobacterium atrosepticum (strain SCRI 1043 / ATCC BAA-672) (Erwinia carotovora subsp. atroseptica).